The primary structure comprises 196 residues: Large ribosomal subunit protein uL10 (196 aa).

The segment at 167–196 (EKKAAEGPAEAPQPATEPPAEAPEAPADAE) is disordered.

This sequence belongs to the universal ribosomal protein uL10 family. As to quaternary structure, part of the ribosomal stalk of the 50S ribosomal subunit. The N-terminus interacts with L11 and the large rRNA to form the base of the stalk. The C-terminus forms an elongated spine to which L12 dimers bind in a sequential fashion forming a multimeric L10(L12)X complex.

Its function is as follows. Forms part of the ribosomal stalk, playing a central role in the interaction of the ribosome with GTP-bound translation factors. This chain is Large ribosomal subunit protein uL10, found in Mycolicibacterium paratuberculosis (strain ATCC BAA-968 / K-10) (Mycobacterium paratuberculosis).